The primary structure comprises 353 residues: Quinolinate synthase (353 aa).

Positions 47 and 68 each coordinate iminosuccinate. [4Fe-4S] cluster is bound at residue Cys-113. Iminosuccinate-binding positions include 139–141 (YAN) and Ser-156. Cys-200 is a [4Fe-4S] cluster binding site. Iminosuccinate is bound by residues 226 to 228 (HPE) and Thr-243. Cys-297 contacts [4Fe-4S] cluster.

Belongs to the quinolinate synthase family. Type 1 subfamily. [4Fe-4S] cluster is required as a cofactor.

It localises to the cytoplasm. It catalyses the reaction iminosuccinate + dihydroxyacetone phosphate = quinolinate + phosphate + 2 H2O + H(+). It participates in cofactor biosynthesis; NAD(+) biosynthesis; quinolinate from iminoaspartate: step 1/1. Functionally, catalyzes the condensation of iminoaspartate with dihydroxyacetone phosphate to form quinolinate. The protein is Quinolinate synthase of Vibrio campbellii (strain ATCC BAA-1116).